Here is a 325-residue protein sequence, read N- to C-terminus: Intelectin (325 aa).

The signal sequence occupies residues 1–23 (MKYCVLLIMIHLLLVELPQFPEA). The region spanning 44-266 (IRSSYIGRSC…AAMAICSGVK (223 aa)) is the Fibrinogen C-terminal domain. Cysteines 53 and 82 form a disulfide. Ca(2+) is bound by residues H98, E99, N101, G104, G109, D110, D145, E274, E286, and D294. Intrachain disulfides connect C106–C292 and C262–C277. A carbohydrate contacts are provided by residues 274-275 (EH) and E286.

Expressed at high levels in caudal kidney, liver, and swim bladder. Also expressed in gill, spleen, intestine and head kidney. Not detected in heart.

Functionally, may be involved in innate immune surveillance. May specifically recognize carbohydrate chains of pathogens and bacterial components in a calcium-dependent manner. In vitro binds N-acetylglucosamine residues. This is Intelectin from Oncorhynchus mykiss (Rainbow trout).